The primary structure comprises 185 residues: Elongation factor P (185 aa).

This sequence belongs to the elongation factor P family.

It is found in the cytoplasm. It functions in the pathway protein biosynthesis; polypeptide chain elongation. In terms of biological role, involved in peptide bond synthesis. Stimulates efficient translation and peptide-bond synthesis on native or reconstituted 70S ribosomes in vitro. Probably functions indirectly by altering the affinity of the ribosome for aminoacyl-tRNA, thus increasing their reactivity as acceptors for peptidyl transferase. The chain is Elongation factor P from Burkholderia mallei (strain NCTC 10247).